A 511-amino-acid polypeptide reads, in one-letter code: Caspase-8 (511 aa).

A propeptide spanning residues 1-242 is cleaved from the precursor; the sequence is MSGHNILTQL…MDGNGIANES (242 aa). Active-site residues include H352 and C393. Residues 406 to 415 constitute a propeptide that is removed on maturation; that stretch reads KINASTKSPC.

Belongs to the peptidase C14A family. Heterotetramer that consists of two anti-parallel arranged heterodimers, each one formed by a 15 kDa (caspase-8 subunit p15) and a 10 kDa (caspase-8 subunit p10) subunit. Interacts with the N-terminus of Fadd.

The protein localises to the cytoplasm. The catalysed reaction is Strict requirement for Asp at position P1 and has a preferred cleavage sequence of (Leu/Asp/Val)-Glu-Thr-Asp-|-(Gly/Ser/Ala).. Functionally, effector of the programmed cell death (PCD) activators rpr, grim and W. May play an apoptotic role in the germline as well as soma. Role in immune response, required to resist Gram-negative bacterial infections by regulating DptA. Fadd interacts with Dredd, Fadd promotes cleavage of Dredd and is necessary and sufficient for enhancing Dredd-induced apoptosis. This is Caspase-8 from Drosophila pseudoobscura pseudoobscura (Fruit fly).